Reading from the N-terminus, the 301-residue chain is Acetyl-coenzyme A carboxylase carboxyl transferase subunit beta (301 aa).

The CoA carboxyltransferase N-terminal domain maps to 25-294 (LWIKDPSTGE…NSDAPAPQKP (270 aa)).

This sequence belongs to the AccD/PCCB family. In terms of assembly, acetyl-CoA carboxylase is a heterohexamer composed of biotin carboxyl carrier protein (AccB), biotin carboxylase (AccC) and two subunits each of ACCase subunit alpha (AccA) and ACCase subunit beta (AccD).

The protein localises to the cytoplasm. The enzyme catalyses N(6)-carboxybiotinyl-L-lysyl-[protein] + acetyl-CoA = N(6)-biotinyl-L-lysyl-[protein] + malonyl-CoA. It functions in the pathway lipid metabolism; malonyl-CoA biosynthesis; malonyl-CoA from acetyl-CoA: step 1/1. In terms of biological role, component of the acetyl coenzyme A carboxylase (ACC) complex. Biotin carboxylase (BC) catalyzes the carboxylation of biotin on its carrier protein (BCCP) and then the CO(2) group is transferred by the transcarboxylase to acetyl-CoA to form malonyl-CoA. The polypeptide is Acetyl-coenzyme A carboxylase carboxyl transferase subunit beta (Brucella abortus (strain 2308)).